Here is a 296-residue protein sequence, read N- to C-terminus: LysM and putative peptidoglycan-binding domain-containing protein 4 (296 aa).

The Extracellular segment spans residues 1–217 (MRHEELLTKT…PMDGADCGIQ (217 aa)). The disordered stretch occupies residues 29–67 (KNGSGDSGDSSEEESHRVVLRPRGKERHKSGVHQPPQAG). An N-linked (GlcNAc...) asparagine glycan is attached at Asn-30. Basic residues predominate over residues 46–59 (VVLRPRGKERHKSG). Positions 74-118 (LQRELAQEDSLNKLALQYGCKVADIKKVNNFIREQDLYALKSVKI) constitute a LysM domain. Residues 218-238 (WWNAVFIMLLIGIVLPVFYLV) form a helical membrane-spanning segment. Over 239–296 (YFKIQASGETPNSLNTTVIPNGSMAMGTVPGQAPRLAVAVPAVTSADSQFSQTTQAGS) the chain is Cytoplasmic.

Its subcellular location is the membrane. The polypeptide is LysM and putative peptidoglycan-binding domain-containing protein 4 (LYSMD4) (Homo sapiens (Human)).